Reading from the N-terminus, the 262-residue chain is Beta-phosphoglucomutase (262 aa).

Residue D29 is the Nucleophile of the active site. Mg(2+) contacts are provided by D29 and D31. Residue D29 is modified to 4-aspartylphosphate. Catalysis depends on D31, which acts as the Proton donor/acceptor. Positions 31, 79, 82, 157, and 159 each coordinate beta-D-glucose 6-phosphate. Mg(2+) is bound at residue D215.

The protein belongs to the HAD-like hydrolase superfamily. CbbY/CbbZ/Gph/YieH family. As to quaternary structure, monomer. Mg(2+) serves as cofactor. Post-translationally, autophosphorylated.

The catalysed reaction is beta-D-glucose 1-phosphate = beta-D-glucose 6-phosphate. Functionally, catalyzes the interconversion of D-glucose 1-phosphate (G1P) and D-glucose 6-phosphate (G6P), forming beta-D-glucose 1,6-(bis)phosphate (beta-G16P) as an intermediate. This is Beta-phosphoglucomutase from Mycobacterium bovis (strain ATCC BAA-935 / AF2122/97).